We begin with the raw amino-acid sequence, 481 residues long: Aspartyl/glutamyl-tRNA(Asn/Gln) amidotransferase subunit B (481 aa).

Belongs to the GatB/GatE family. GatB subfamily. In terms of assembly, heterotrimer of A, B and C subunits.

It carries out the reaction L-glutamyl-tRNA(Gln) + L-glutamine + ATP + H2O = L-glutaminyl-tRNA(Gln) + L-glutamate + ADP + phosphate + H(+). The catalysed reaction is L-aspartyl-tRNA(Asn) + L-glutamine + ATP + H2O = L-asparaginyl-tRNA(Asn) + L-glutamate + ADP + phosphate + 2 H(+). Its function is as follows. Allows the formation of correctly charged Asn-tRNA(Asn) or Gln-tRNA(Gln) through the transamidation of misacylated Asp-tRNA(Asn) or Glu-tRNA(Gln) in organisms which lack either or both of asparaginyl-tRNA or glutaminyl-tRNA synthetases. The reaction takes place in the presence of glutamine and ATP through an activated phospho-Asp-tRNA(Asn) or phospho-Glu-tRNA(Gln). The polypeptide is Aspartyl/glutamyl-tRNA(Asn/Gln) amidotransferase subunit B (Pseudomonas savastanoi pv. phaseolicola (strain 1448A / Race 6) (Pseudomonas syringae pv. phaseolicola (strain 1448A / Race 6))).